A 547-amino-acid chain; its full sequence is MAFEELLDKVGGFGPFQLWNVALLALPRVLLPMHFLLPIFLTAVPAHRCALPGAPANFSHQDAWLEAHLPREPDGRFSSCLRFTHSRALPNTTLWGLGQSPGEQLEGEPSTVPCPQGWEYDHSEFSSTIATEWDLVCEQKGLNRATSTFFFAGVLVGAVAFGYLSDRFGRRRLLLVAYVSALVLGLVSAASVSYTMFAITRTLTGTALAGFTIIVMPLELEWLDVGHRTVAGVLSSTFWTGGVMLLALVGYLIRDWRWLLLAVTLPCAPGILSLWWVPESARWLLTQGRVEDAHRYLLRCARLNGRPVGEDGLSREALSKVAAAERVVRRPSYVDLFRTPRLRHISLCCMVVWFGVNFSYYGLSLDVSGLGLNVYQTQLLFGAVELPSKLLVYLSVRHAGRRLTLAGTLLGTSLSLGFRLLVSSEMKSWSTALAVLGKGFSEAAFTTAYLFTSELYPTVLRQTGMGLTALVGRLGGSLAPLAALLDGVWLSLPKLAYGGIALLAACTALLLPETKQAQLPETIQDVERKSAPSSLQEEEMPMKQVQD.

12 helical membrane passes run 21 to 41, 145 to 165, 173 to 193, 203 to 223, 233 to 253, 258 to 278, 345 to 365, 374 to 396, 403 to 423, 431 to 451, 465 to 485, and 492 to 512; these read VALL…PIFL, ATST…GYLS, LLLV…ASVS, LTGT…LEWL, VLSS…GYLI, WLLL…WWVP, ISLC…GLSL, VYQT…YLSV, LTLA…LLVS, TALA…AYLF, MGLT…AALL, and LPKL…LLLP. The interval 521–547 is disordered; that stretch reads ETIQDVERKSAPSSLQEEEMPMKQVQD.

Belongs to the major facilitator (TC 2.A.1) superfamily. Organic cation transporter (TC 2.A.1.19) family.

The protein resides in the basolateral cell membrane. It localises to the apical cell membrane. The protein localises to the cell membrane. The enzyme catalyses orotate(out) + L-glutamate(in) = orotate(in) + L-glutamate(out). It carries out the reaction 3',5'-cyclic GMP(in) = 3',5'-cyclic GMP(out). The catalysed reaction is GMP(in) = GMP(out). It catalyses the reaction 2'-deoxyguanosine(in) = 2'-deoxyguanosine(out). The enzyme catalyses GDP(in) = GDP(out). It carries out the reaction guanosine(in) = guanosine(out). The catalysed reaction is GTP(in) = GTP(out). It catalyses the reaction 3',5'-cyclic AMP(in) = 3',5'-cyclic AMP(out). The enzyme catalyses creatinine(in) = creatinine(out). It carries out the reaction prostaglandin E2(out) = prostaglandin E2(in). The catalysed reaction is 2-oxoglutarate(in) = 2-oxoglutarate(out). It catalyses the reaction glutarate(in) = glutarate(out). The enzyme catalyses urate(out) = urate(in). It carries out the reaction estrone 3-sulfate(out) = estrone 3-sulfate(in). In terms of biological role, functions as a Na(+)-independent bidirectional multispecific transporter. Contributes to the renal and hepatic elimination of endogenous organic compounds from the systemic circulation into the urine and bile, respectively. Capable of transporting a wide range of purine and pyrimidine nucleobases, nucleosides and nucleotides, with cGMP, 2'deoxyguanosine and GMP being the preferred substrates. Functions as a pH- and chloride-independent cGMP bidirectional facilitative transporter that can regulate both intracellular and extracellular levels of cGMP and may be involved in cGMP signaling pathways. Mediates orotate/glutamate bidirectional exchange and most likely display a physiological role in hepatic release of glutamate into the blood. Involved in renal secretion and possible reabsorption of creatinine. Able to uptake prostaglandin E2 (PGE2) and may contribute to PGE2 renal excretion. Also transports alpha-ketoglutarate and urate. Apart from the orotate/glutamate exchange, the counterions for the uptake of other SLC22A7/OAT2 substrates remain to be identified. The polypeptide is Solute carrier family 22 member 7 (SLC22A7) (Sus scrofa (Pig)).